The sequence spans 234 residues: Ubiquinone biosynthesis O-methyltransferase (234 aa).

Residues R37, G56, D77, and M121 each coordinate S-adenosyl-L-methionine.

This sequence belongs to the methyltransferase superfamily. UbiG/COQ3 family.

The catalysed reaction is a 3-demethylubiquinol + S-adenosyl-L-methionine = a ubiquinol + S-adenosyl-L-homocysteine + H(+). It catalyses the reaction a 3-(all-trans-polyprenyl)benzene-1,2-diol + S-adenosyl-L-methionine = a 2-methoxy-6-(all-trans-polyprenyl)phenol + S-adenosyl-L-homocysteine + H(+). Its pathway is cofactor biosynthesis; ubiquinone biosynthesis. In terms of biological role, O-methyltransferase that catalyzes the 2 O-methylation steps in the ubiquinone biosynthetic pathway. The sequence is that of Ubiquinone biosynthesis O-methyltransferase from Aromatoleum aromaticum (strain DSM 19018 / LMG 30748 / EbN1) (Azoarcus sp. (strain EbN1)).